The chain runs to 200 residues: dITP/XTP pyrophosphatase (200 aa).

A substrate-binding site is contributed by 7–12 (SNNRGK). Residue aspartate 68 is the Proton acceptor of the active site. Mg(2+) is bound at residue aspartate 68. Substrate contacts are provided by residues alanine 69, 154–157 (FGFD), lysine 177, and 182–183 (HR).

Belongs to the HAM1 NTPase family. In terms of assembly, homodimer. Requires Mg(2+) as cofactor.

It catalyses the reaction XTP + H2O = XMP + diphosphate + H(+). The catalysed reaction is dITP + H2O = dIMP + diphosphate + H(+). The enzyme catalyses ITP + H2O = IMP + diphosphate + H(+). Its function is as follows. Pyrophosphatase that catalyzes the hydrolysis of nucleoside triphosphates to their monophosphate derivatives, with a high preference for the non-canonical purine nucleotides XTP (xanthosine triphosphate), dITP (deoxyinosine triphosphate) and ITP. Seems to function as a house-cleaning enzyme that removes non-canonical purine nucleotides from the nucleotide pool, thus preventing their incorporation into DNA/RNA and avoiding chromosomal lesions. The sequence is that of dITP/XTP pyrophosphatase from Delftia acidovorans (strain DSM 14801 / SPH-1).